Reading from the N-terminus, the 136-residue chain is MTERTLILIKPDGVERGLIGEIIARIERKGLKISALDLRVADRETAEKHYAEHADKPFFGELVNFITSAPLIAGVVEGPRAIEAWRQLAGGTDPVAKATPGTIRGDFALEVSTNVVHGSDSPESAEREISIWFPNL.

Positions 10, 58, 86, 92, 104, and 114 each coordinate ATP. His117 functions as the Pros-phosphohistidine intermediate in the catalytic mechanism.

The protein belongs to the NDK family. Homotetramer. Mg(2+) is required as a cofactor.

The protein resides in the cytoplasm. The catalysed reaction is a 2'-deoxyribonucleoside 5'-diphosphate + ATP = a 2'-deoxyribonucleoside 5'-triphosphate + ADP. It carries out the reaction a ribonucleoside 5'-diphosphate + ATP = a ribonucleoside 5'-triphosphate + ADP. In terms of biological role, major role in the synthesis of nucleoside triphosphates other than ATP. The ATP gamma phosphate is transferred to the NDP beta phosphate via a ping-pong mechanism, using a phosphorylated active-site intermediate. The polypeptide is Nucleoside diphosphate kinase (Corynebacterium diphtheriae (strain ATCC 700971 / NCTC 13129 / Biotype gravis)).